The primary structure comprises 740 residues: 1,4-alpha-glucan branching enzyme GlgB (740 aa).

Aspartate 414 (nucleophile) is an active-site residue. Catalysis depends on glutamate 467, which acts as the Proton donor.

The protein belongs to the glycosyl hydrolase 13 family. GlgB subfamily. In terms of assembly, monomer.

The enzyme catalyses Transfers a segment of a (1-&gt;4)-alpha-D-glucan chain to a primary hydroxy group in a similar glucan chain.. The protein operates within glycan biosynthesis; glycogen biosynthesis. In terms of biological role, catalyzes the formation of the alpha-1,6-glucosidic linkages in glycogen by scission of a 1,4-alpha-linked oligosaccharide from growing alpha-1,4-glucan chains and the subsequent attachment of the oligosaccharide to the alpha-1,6 position. The protein is 1,4-alpha-glucan branching enzyme GlgB of Rhodospirillum rubrum (strain ATCC 11170 / ATH 1.1.1 / DSM 467 / LMG 4362 / NCIMB 8255 / S1).